A 581-amino-acid polypeptide reads, in one-letter code: Serine/threonine protein phosphatase 2A 55 kDa regulatory subunit B alpha isoform (581 aa).

A disordered region spans residues methionine 1–proline 27. The segment covering alanine 14–glycine 25 has biased composition (low complexity). WD repeat units follow at residues glutamine 47–serine 86 and glutamate 123–valine 164. The segment covering arginine 172–glycine 189 has biased composition (low complexity). The interval arginine 172 to proline 192 is disordered. WD repeat units lie at residues alanine 241–asparagine 279, aspartate 290–asparagine 330, glutamate 349–serine 387, and aspartate 492–isoleucine 530.

It belongs to the phosphatase 2A regulatory subunit B family. In terms of assembly, PP2A consists of a common heteromeric enzyme, composed of a catalytic subunit (subunits C), a constant regulatory subunit (subunit A), and a variety of regulatory subunits such as subunits B (the R2/B/PR55/B55, R3/B''/PR72/PR130/PR59 and R5/B'/B56 families).

Its function is as follows. The B regulatory subunit may modulate substrate selectivity and catalytic activity, and may also direct the localization of the catalytic enzyme to a particular subcellular compartment. In Oryza sativa subsp. japonica (Rice), this protein is Serine/threonine protein phosphatase 2A 55 kDa regulatory subunit B alpha isoform.